The chain runs to 540 residues: NEDD8-activating enzyme E1 regulatory subunit AXR1 (540 aa).

This sequence belongs to the ubiquitin-activating E1 family. ULA1 subfamily. In terms of assembly, heterodimer of ECR1 and AXR1. The complex binds to RUB1/NEDD8 and RCE1. As to expression, expressed in shoot, root and floral meristems, in vascular tissues of cotyledons and mature leaves, and in the stele of the root. Expressed at higher levels on the lower side of an emerging root during germination and at higher levels on the underside of the apical hook.

The protein resides in the nucleus. Its pathway is protein modification; protein neddylation. Regulatory subunit of the dimeric ECR1-AXR1 E1 enzyme. E1 activates RUB1/NEDD8 by first adenylating its C-terminal glycine residue with ATP, thereafter linking this residue to the side chain of the catalytic cysteine, yielding a RUB1-ECR1 thioester and free AMP. E1 finally transfers RUB1 to the catalytic cysteine of RCE1. Plays an important role in auxin response. Regulates the chromosomal localization of meiotic recombination by crossovers (COs) and subsequent synapsis, probably through the activation of a CRL4 complex. Required for E3-mediated protein degradation in response to auxin, jasmonic acid and cold stress. Required for the COP1-COP10-CSN-mediated repression of photomorphogenesis in the dark. May function redundantly with AXL1 in the RUB conjugating pathway. Seems not to be functionally equivalent to AXL1 in vivo. The sequence is that of NEDD8-activating enzyme E1 regulatory subunit AXR1 from Arabidopsis thaliana (Mouse-ear cress).